A 630-amino-acid chain; its full sequence is Plastin-1 (630 aa).

The interval 1–114 (MENNVTTISR…LGGTSSISTE (114 aa)) is fimbrin headpiece. EF-hand domains lie at 11–46 (EELE…ASLP) and 51–86 (KVRE…LKSK). Ca(2+)-binding residues include Asp-24, Asp-26, Ser-28, Tyr-30, Glu-35, Asp-64, Asn-66, Asp-68, Lys-70, and Glu-75. Actin-binding stretches follow at residues 108 to 375 (TSSI…LFNT) and 376 to 624 (YPAL…LMGR). Residues 115–630 (GTQHSYSEEE…LMGRGLNKIK (516 aa)) are fimbrin core. Calponin-homology (CH) domains lie at 122 to 238 (EEEK…KVGL), 266 to 377 (LSPE…NTYP), 396 to 505 (SNEE…RRYT), and 517 to 626 (KVND…GRGL).

Monomer. In terms of processing, the N-terminus is blocked.

It is found in the cytoplasm. Its subcellular location is the cell projection. It localises to the stereocilium. Its function is as follows. Actin-bundling protein. In the inner ear, it is required for stereocilia formation. Mediates liquid packing of actin filaments that is necessary for stereocilia to grow to their proper dimensions. The protein is Plastin-1 (PLS1) of Gallus gallus (Chicken).